The primary structure comprises 487 residues: V-type proton ATPase subunit B2 (487 aa).

Gly2 is modified (N-acetylglycine).

It belongs to the ATPase alpha/beta chains family. As to quaternary structure, V-ATPase is a heteromultimeric enzyme composed of a peripheral catalytic V1 complex (components A to H) attached to an integral membrane V0 proton pore complex (components: a, c, c'', d and e).

It is found in the vacuole membrane. Functionally, non-catalytic subunit of the peripheral V1 complex of vacuolar ATPase. V-ATPase is responsible for acidifying a variety of intracellular compartments in eukaryotic cells. This is V-type proton ATPase subunit B2 (VHA-B2) from Arabidopsis thaliana (Mouse-ear cress).